The following is a 429-amino-acid chain: Histidine--tRNA ligase (429 aa).

Belongs to the class-II aminoacyl-tRNA synthetase family. As to quaternary structure, homodimer.

The protein localises to the cytoplasm. It catalyses the reaction tRNA(His) + L-histidine + ATP = L-histidyl-tRNA(His) + AMP + diphosphate + H(+). The polypeptide is Histidine--tRNA ligase (Streptococcus pneumoniae serotype 19F (strain G54)).